The primary structure comprises 397 residues: 3-ketoacyl-CoA thiolase, mitochondrial (397 aa).

A mitochondrion; not cleaved-targeting transit peptide spans 1-16; that stretch reads MALLRGVFIVAAKRTP. Lys-25 is subject to N6-acetyllysine; alternate. Lys-25 carries the post-translational modification N6-succinyllysine; alternate. Ser-28 is modified (phosphoserine). Lys-45 is subject to N6-succinyllysine. The Acyl-thioester intermediate role is filled by Cys-92. Phosphothreonine is present on Thr-119. The residue at position 121 (Ser-121) is a Phosphoserine. A Phosphotyrosine modification is found at Tyr-127. Thr-136 carries the phosphothreonine modification. 6 positions are modified to N6-acetyllysine; alternate: Lys-137, Lys-143, Lys-158, Lys-171, Lys-191, and Lys-209. 6 positions are modified to N6-succinyllysine; alternate: Lys-137, Lys-143, Lys-158, Lys-171, Lys-191, and Lys-209. N6-succinyllysine occurs at positions 211, 212, and 214. Arg-224 and Thr-227 together coordinate CoA. Residue Lys-234 is modified to N6-acetyllysine; alternate. The residue at position 234 (Lys-234) is an N6-succinyllysine; alternate. At Lys-240 the chain carries N6-succinyllysine. N6-acetyllysine is present on Lys-241. Ser-251 lines the CoA pocket. An N6-acetyllysine mark is found at Lys-269 and Lys-270. Lys-305 carries the post-translational modification N6-acetyllysine; alternate. The residue at position 305 (Lys-305) is an N6-succinyllysine; alternate. Residue Ser-310 is modified to Phosphoserine. Lys-312 bears the N6-acetyllysine; alternate mark. The residue at position 312 (Lys-312) is an N6-succinyllysine; alternate. Lys-340 is subject to N6-acetyllysine. A Phosphoserine modification is found at Ser-344. An N6-acetyllysine modification is found at Lys-375. Cys-382 (proton donor/acceptor) is an active-site residue.

Belongs to the thiolase-like superfamily. Thiolase family. As to quaternary structure, homotetramer. Interacts with BNIP3.

The protein resides in the mitochondrion. It carries out the reaction an acyl-CoA + acetyl-CoA = a 3-oxoacyl-CoA + CoA. The enzyme catalyses 2 acetyl-CoA = acetoacetyl-CoA + CoA. It catalyses the reaction acetyl-CoA + H2O = acetate + CoA + H(+). The catalysed reaction is propanoyl-CoA + H2O = propanoate + CoA + H(+). It carries out the reaction butanoyl-CoA + H2O = butanoate + CoA + H(+). The enzyme catalyses hexanoyl-CoA + H2O = hexanoate + CoA + H(+). It catalyses the reaction octanoyl-CoA + H2O = octanoate + CoA + H(+). The catalysed reaction is decanoyl-CoA + H2O = decanoate + CoA + H(+). It carries out the reaction dodecanoyl-CoA + H2O = dodecanoate + CoA + H(+). The enzyme catalyses tetradecanoyl-CoA + H2O = tetradecanoate + CoA + H(+). It catalyses the reaction hexadecanoyl-CoA + H2O = hexadecanoate + CoA + H(+). The protein operates within lipid metabolism; fatty acid beta-oxidation. Functionally, in the production of energy from fats, this is one of the enzymes that catalyzes the last step of the mitochondrial beta-oxidation pathway, an aerobic process breaking down fatty acids into acetyl-CoA. Using free coenzyme A/CoA, catalyzes the thiolytic cleavage of medium- to long-chain unbranched 3-oxoacyl-CoAs into acetyl-CoA and a fatty acyl-CoA shortened by two carbon atoms. Also catalyzes the condensation of two acetyl-CoA molecules into acetoacetyl-CoA and could be involved in the production of ketone bodies. Also displays hydrolase activity on various fatty acyl-CoAs. Thereby, could be responsible for the production of acetate in a side reaction to beta-oxidation. Abolishes BNIP3-mediated apoptosis and mitochondrial damage. The protein is 3-ketoacyl-CoA thiolase, mitochondrial (Acaa2) of Mus musculus (Mouse).